The sequence spans 534 residues: Phenylalanine N-monooxygenase CYP79D16 (534 aa).

Positions 1-21 (MEANVGFLTLCLAITLVRFLM) are cleaved as a signal peptide. Cys-472 serves as a coordination point for heme. N-linked (GlcNAc...) asparagine glycosylation is present at Asn-500.

The protein belongs to the cytochrome P450 family. The cofactor is heme. Expressed in seedlings.

It carries out the reaction L-phenylalanine + 2 reduced [NADPH--hemoprotein reductase] + 2 O2 = (E)-phenylacetaldehyde oxime + 2 oxidized [NADPH--hemoprotein reductase] + CO2 + 3 H2O + 2 H(+). Functionally, involved in L-phenylalanine-derived cyanogenic glycoside biosynthesis, including prunasin and amygdalin defensive agents. Catalyzes the conversion of L-phenylalanine (Phe) into phenylacetaldoxime (PAOx). Cannot use tyrosine (Tyr), tryptophan (Trp) and valine (Val) as substrates. The chain is Phenylalanine N-monooxygenase CYP79D16 from Prunus mume (Japanese apricot).